A 202-amino-acid chain; its full sequence is Lymphotoxin-alpha (202 aa).

The N-terminal stretch at 1–33 (MTPLGRLHLLRVLSTPPVFLLGLLLALPLGAQG) is a signal peptide. The 143-residue stretch at 60 to 202 (PAAHLVGYPS…STVFFGAFAL (143 aa)) folds into the THD domain. N93 carries N-linked (GlcNAc...) asparagine glycosylation.

The protein belongs to the tumor necrosis factor family. Homotrimer, and heterotrimer of either two LTB and one LTA subunits or (less prevalent) two LTA and one LTB subunits. Interacts with TNFRSF14.

It is found in the secreted. Its subcellular location is the membrane. Functionally, cytokine that in its homotrimeric form binds to TNFRSF1A/TNFR1, TNFRSF1B/TNFBR and TNFRSF14/HVEM. In its heterotrimeric form with LTB binds to TNFRSF3/LTBR. Lymphotoxin is produced by lymphocytes and is cytotoxic for a wide range of tumor cells in vitro and in vivo. This Rattus norvegicus (Rat) protein is Lymphotoxin-alpha (Lta).